Here is a 60-residue protein sequence, read N- to C-terminus: Cytotoxin 7 (60 aa).

4 disulfides stabilise this stretch: cysteine 3/cysteine 21, cysteine 14/cysteine 38, cysteine 42/cysteine 53, and cysteine 54/cysteine 59.

It belongs to the three-finger toxin family. Short-chain subfamily. Type IA cytotoxin sub-subfamily. Monomer in solution; Homodimer and oligomer in the presence of negatively charged lipids forming a pore with a size ranging between 20 and 30 Angstroms. As to expression, expressed by the venom gland.

It is found in the secreted. It localises to the target cell membrane. Functionally, shows cytolytic activity on many different cells by forming pore in lipid membranes. In vivo, increases heart rate or kills the animal by cardiac arrest. In addition, it binds to heparin with high affinity, interacts with Kv channel-interacting protein 1 (KCNIP1) in a calcium-independent manner, and binds to integrin alpha-V/beta-3 (ITGAV/ITGB3) with moderate affinity. This chain is Cytotoxin 7, found in Naja annulifera (Banded Egyptian cobra).